The primary structure comprises 394 residues: MSQPQSSQVTKRGLTDPERAAIIAAAVPDHALDTQRKYHYFIQPRWKPLSEYEQLSCYAQPNPDWIAGGLDWGDWTQKFHGGRPSWGNESTELRTTDWYRHRDPARRWHHPYVKDKSEEARYTQRFLAAYSSEGSIRTIDPYWRDEILNKYFGALLYSEYGLFNAHSSVGRDCLSDTIRQTAVFAALDKVDNAQMIQMERLFIAKLVPGFDASTDVPKKIWTTDPIYSGARATVQEIWQGVQDWNEILWAGHAVMIATFGQFARREFFQRLATVYGDTLTPFFTAQSQTYFQTTRGAIDDLFVYCLANDSEFGAHNRTFLNAWTEHYLASSVAALKDFVGLYAKVEKSRADRSRRRLRGAAASSAIGRSITPDKIGFRVDVDQKVDAVLAGYKN.

M.trichosporium has two forms of methane monooxygenase, a soluble and a membrane-bound type. The soluble type consists of four components (A to D): protein A, comprising three chains, in an alpha-2, beta-2, gamma-2 configuration, is a nonheme iron protein containing an unusual mu-hydroxo bridge structure at its active site and interacts with both oxygen and methane.

The enzyme catalyses methane + NADH + O2 + H(+) = methanol + NAD(+) + H2O. The catalysed reaction is methane + NADPH + O2 + H(+) = methanol + NADP(+) + H2O. Its function is as follows. Responsible for the initial oxygenation of methane to methanol in methanotrophs. It also catalyzes the monohydroxylation of a variety of unactivated alkenes, alicyclic, aromatic and heterocyclic compounds. In Methylosinus trichosporium, this protein is Methane monooxygenase component A beta chain (mmoY).